The chain runs to 120 residues: MLVNRRYTAKGKNLPASPKKVRPIADNIRGKSYVKAIAVLCSMPNKGAKLLEKVVKSAASNAMYHNKNLSEDMIFIKMVMVDDGRRRKKIWPRARGRADRLVNRNCHIFVEVDEKKDIKG.

Belongs to the universal ribosomal protein uL22 family. In terms of assembly, part of the 50S ribosomal subunit.

In terms of biological role, this protein binds specifically to 23S rRNA; its binding is stimulated by other ribosomal proteins, e.g. L4, L17, and L20. It is important during the early stages of 50S assembly. It makes multiple contacts with different domains of the 23S rRNA in the assembled 50S subunit and ribosome. Functionally, the globular domain of the protein is located near the polypeptide exit tunnel on the outside of the subunit, while an extended beta-hairpin is found that lines the wall of the exit tunnel in the center of the 70S ribosome. The chain is Large ribosomal subunit protein uL22 from Borreliella afzelii (strain PKo) (Borrelia afzelii).